Here is a 364-residue protein sequence, read N- to C-terminus: tRNA 2-selenouridine synthase (364 aa).

The Rhodanese domain occupies 14–137; sequence LIADTPIIDV…LRQTTIQATI (124 aa). C97 acts as the S-selanylcysteine intermediate in catalysis.

This sequence belongs to the SelU family. In terms of assembly, monomer.

The enzyme catalyses 5-methylaminomethyl-2-thiouridine(34) in tRNA + selenophosphate + (2E)-geranyl diphosphate + H2O + H(+) = 5-methylaminomethyl-2-selenouridine(34) in tRNA + (2E)-thiogeraniol + phosphate + diphosphate. It catalyses the reaction 5-methylaminomethyl-2-thiouridine(34) in tRNA + (2E)-geranyl diphosphate = 5-methylaminomethyl-S-(2E)-geranyl-thiouridine(34) in tRNA + diphosphate. The catalysed reaction is 5-methylaminomethyl-S-(2E)-geranyl-thiouridine(34) in tRNA + selenophosphate + H(+) = 5-methylaminomethyl-2-(Se-phospho)selenouridine(34) in tRNA + (2E)-thiogeraniol. It carries out the reaction 5-methylaminomethyl-2-(Se-phospho)selenouridine(34) in tRNA + H2O = 5-methylaminomethyl-2-selenouridine(34) in tRNA + phosphate. Involved in the post-transcriptional modification of the uridine at the wobble position (U34) of tRNA(Lys), tRNA(Glu) and tRNA(Gln). Catalyzes the conversion of 2-thiouridine (S2U-RNA) to 2-selenouridine (Se2U-RNA). Acts in a two-step process involving geranylation of 2-thiouridine (S2U) to S-geranyl-2-thiouridine (geS2U) and subsequent selenation of the latter derivative to 2-selenouridine (Se2U) in the tRNA chain. This chain is tRNA 2-selenouridine synthase, found in Escherichia coli (strain 55989 / EAEC).